Here is a 366-residue protein sequence, read N- to C-terminus: tRNA/tmRNA (uracil-C(5))-methyltransferase (366 aa).

The S-adenosyl-L-methionine site is built by glutamine 190, tyrosine 218, asparagine 223, glutamate 239, and aspartate 299. Residue cysteine 324 is the Nucleophile of the active site. The active-site Proton acceptor is glutamate 358.

The protein belongs to the class I-like SAM-binding methyltransferase superfamily. RNA M5U methyltransferase family. TrmA subfamily.

It catalyses the reaction uridine(54) in tRNA + S-adenosyl-L-methionine = 5-methyluridine(54) in tRNA + S-adenosyl-L-homocysteine + H(+). The catalysed reaction is uridine(341) in tmRNA + S-adenosyl-L-methionine = 5-methyluridine(341) in tmRNA + S-adenosyl-L-homocysteine + H(+). Functionally, dual-specificity methyltransferase that catalyzes the formation of 5-methyluridine at position 54 (m5U54) in all tRNAs, and that of position 341 (m5U341) in tmRNA (transfer-mRNA). The polypeptide is tRNA/tmRNA (uracil-C(5))-methyltransferase (Escherichia fergusonii (strain ATCC 35469 / DSM 13698 / CCUG 18766 / IAM 14443 / JCM 21226 / LMG 7866 / NBRC 102419 / NCTC 12128 / CDC 0568-73)).